The sequence spans 335 residues: Trans-1,2-dihydrobenzene-1,2-diol dehydrogenase (335 aa).

It belongs to the Gfo/Idh/MocA family. Homodimer.

The catalysed reaction is (1R,2R)-1,2-dihydrobenzene-1,2-diol + NADP(+) = catechol + NADPH + H(+). It carries out the reaction D-xylose + NADP(+) = D-xylono-1,5-lactone + NADPH + H(+). In Bos taurus (Bovine), this protein is Trans-1,2-dihydrobenzene-1,2-diol dehydrogenase (DHDH).